A 397-amino-acid chain; its full sequence is MEDFKMKTLAAFLSLLVLCWAQEEAKLTKANNRFGLRLLRALPSGPEKNVFFSPYSVSAAMGMAFAGARGQTQQELSQGLGFSDVDLTDAGVLDAYTHHTERLKSTPSNSTLDVANAAAIQRTLALLNSYESALQSSFGAELHKVDFAGEPQAAVDFVNNWVKRKTHDKIEKLFNEPLDPDTLLVLLNAIYFKGEWNTAFVKEHTEKRQFFNGGVTPVEVDTMRLEARIKYRFFDDLQVEVVELPYRGLDYTMAILLPKENTGVEGLKQNLTVDRFQNYLSDLRERKITVLLPKFKLETKYSLKAPLQSLGIKQIFESGADLSGINDERLRVSAVEHKAVVEVNEEGTVAAATTGVVIVPYSLGPEPVVFRVDHPFLFFIRNTRTDDIFFVGQVNKL.

The N-terminal stretch at 1–21 (MEDFKMKTLAAFLSLLVLCWA) is a signal peptide. Asn-109 and Asn-270 each carry an N-linked (GlcNAc...) asparagine glycan.

It belongs to the serpin family. In terms of assembly, interacts with mouse MCPT4. In terms of tissue distribution, female salivary gland. Ovary. Midgut.

The protein resides in the secreted. Functionally, serine protease inhibitor that modulates blood feeding of ticks on vertebrate species. Inhibits host trypsin, thrombin (F2), alpha-chymotrypsin, cathepsin G (CTSG) and mast cell chymase (CMA1). Inhibits host cathepsin G- and thrombin-induced platelet aggregation. Inhibits acute inflammation in the host. Suppresses neutrophil recruitment in inflamed area. Does not inhibit host plasmin (PLG), factor Xa (F10), factor XIa (F11), elastase and proteinase 3/myeloblastin (PRTN3). (Microbial infection) Inhibits IL6 production by mouse splenic dendritic cells in response to Borrelia burgdorferi exposure. Decreases levels of STAT3 phosphorylation in mouse splenic dendritic cells in response to Borrelia burgdorferi exposure and in Borrelia-primed CD4+ T-lymphocytes. Inhibits differentiation of mouse Th17 cells, a subset of CD4+ T-lymphocytes that play a crucial role in protection against extracellular bacteria, in response to Borrelia burgdorferi exposure via inhibition of the IL6/STAT3 signaling pathway. This is Iripin-2 from Ixodes ricinus (Common tick).